The primary structure comprises 244 residues: Acetoacetate decarboxylase (244 aa).

Lysine 115 functions as the Schiff-base intermediate with acetoacetate in the catalytic mechanism.

The protein belongs to the ADC family. In terms of assembly, homododecamer.

The enzyme catalyses acetoacetate + H(+) = acetone + CO2. Catalyzes the conversion of acetoacetate to acetone and carbon dioxide. The polypeptide is Acetoacetate decarboxylase (Clostridium acetobutylicum (strain ATCC 824 / DSM 792 / JCM 1419 / IAM 19013 / LMG 5710 / NBRC 13948 / NRRL B-527 / VKM B-1787 / 2291 / W)).